Reading from the N-terminus, the 715-residue chain is MRKLIFSLVTSFFLLLPSVIRADEGMWFLMFIKRLNERDMQKKGLQLTAEEIYSINNNSLKNAIVQFNGGCTASIISPDGLVITNHHCGYGAIAGLSTPEHNYLKDGYWAKDRSQELPPKSLYVRFFVRMDNVTDRMLSVVNSSMSEKERQDALNREMEKIQKENSEGGKYVVSVRPFFQGNEYYYFVYQDFKDVRFVGTPPENVGKFGGDTDNWEWPRHTGDFSVFRVYTDKDGNPAPYSPNNIPMKAKKYLNVTLKGVQENDFAMILGYPGRTNRWVSSHWVDQQVKYGYPAWVEASKTAMDAMKAHMDKDKAVRLKYASRYASLANYWKNRQGMIDALTAHKTADLKRAAEKKFAVWANKPENKAEYGNVLSDLATYFEKTNQEAANHNYLLLFFRASRIVPQANGYVKQLNTYLNSSSDQEKQQIRERIAKELDAYYSESYLPAEIDLFADNLKLYADKATDIPQEIAQIKSQYNGDFRKFAAEVFARSIFTTKENFENFMNNPSSDALQSDPIAQIARVMIDKYYNSQSEALKDGYEKAFRKYVKGMRDSKVSLILYPDANSTLRLTYGSVKSLPKDKRNHDVKRNYYTTFKTMLEKYKPGDAEFDMPKKFVEMYEKKDFGRYLDKDGTMHVCFLTNNDITGGNSGSPVMNGKGELIGLAFDGNIEAMAGDVIFDKKLQRTIVVDIRYVLWCIDTFGGAKHIVDEMTIIQ.

The N-terminal stretch at 1–22 is a signal peptide; the sequence is MRKLIFSLVTSFFLLLPSVIRA. Active-site charge relay system residues include His87, Asp223, and Ser650.

It belongs to the peptidase S46 family.

Its function is as follows. Catalyzes the removal of dipeptides from the N-terminus of oligopeptides. Most potently cleaves the synthetic substrate Met-Leu-methylcoumaryl-7-amide (Met-Leu-MCA), followed by Lys-Ala-, Leu-Arg- &gt; Leu-Asp-, Leu-Glu-, &gt;Leu-Lys, and &gt;Val-Arg-MCA, while this enzyme does not hydrolyze Gly-Arg-, Gly-Gly-, Lys-Lys-, or Gly-Pro-MCA. The sequence is that of Dipeptidyl-peptidase 7 (dpp7) from Capnocytophaga gingivalis.